A 229-amino-acid polypeptide reads, in one-letter code: Large ribosomal subunit protein uL1 (229 aa).

As to quaternary structure, part of the 50S ribosomal subunit.

Functionally, binds directly to 23S rRNA. The L1 stalk is quite mobile in the ribosome, and is involved in E site tRNA release. In terms of biological role, protein L1 is also a translational repressor protein, it controls the translation of the L11 operon by binding to its mRNA. In Rhodopseudomonas palustris (strain ATCC BAA-98 / CGA009), this protein is Large ribosomal subunit protein uL1.